The chain runs to 561 residues: MGLGLLQIGLTLCIVIAITPVLGRYIARVFLEERTILDPLMNPIERSIYVISGVRPKDDMTGWQYIRAILYTNLFMGILVYSLIHYQRLLPWNPNGFGVPRWDIILHTVVSFVTNTDQQHYAGETTLSYFSQVAALGFLMFTSAATGLAVGIAFIRGLTGKKLGNFYIDLTRGITRILLPISVIGAIALVLLGVPQTLGGSLTITTLEGGTQYIARGPVASFEMIKMLGENGGGFFAANSAHPFENPNGATNFIETIAMIAIPAAMIYTYGVFAKNIKQAWLLFWMVFIVFVILVWVAATGELQGNPLVNGTLGIEKPNLEGKELRFGWAETALWAVMTTATMCGAVNGMHDALMPQGLFATLFNLFLQIIWGGQGTGTAYLFIYLILTVFLTGLMVGRTPEIFGRKIEKREIVLASLILLVHPIVVLIPSAIALAYPYSLSGITNPGFHGISQVVYEYASASSNNGSGLEGLTDNSLWWNLSTSLSILVGRYVPIIAMLLLADSMSRKQTVPQTPGTLKTDSLLFTTVTAGIVLILGVLTFFPVLALGPIAEAFKLASGS.

The next 12 membrane-spanning stretches (helical) occupy residues 2 to 22, 65 to 85, 135 to 155, 177 to 197, 253 to 273, 280 to 300, 327 to 347, 353 to 373, 378 to 398, 413 to 433, 482 to 502, and 531 to 551; these read GLGL…TPVL, YIRA…SLIH, ALGF…IAFI, ILLP…VPQT, FIET…YGVF, AWLL…VAAT, FGWA…CGAV, ALMP…IIWG, GTAY…LMVG, IVLA…PSAI, LSTS…MLLL, and AGIV…LGPI.

The protein belongs to the KdpA family. As to quaternary structure, the system is composed of three essential subunits: KdpA, KdpB and KdpC.

It is found in the cell membrane. Functionally, part of the high-affinity ATP-driven potassium transport (or Kdp) system, which catalyzes the hydrolysis of ATP coupled with the electrogenic transport of potassium into the cytoplasm. This subunit binds the extracellular potassium ions and delivers the ions to the membrane domain of KdpB through an intramembrane tunnel. The chain is Potassium-transporting ATPase potassium-binding subunit from Anabaena sp. (strain L31).